The primary structure comprises 38 residues: MKVRSSVKPICEHCKVVKRQGVTRIICKRNPKHKQRQG.

It belongs to the bacterial ribosomal protein bL36 family.

The polypeptide is Large ribosomal subunit protein bL36 (Gemmatimonas aurantiaca (strain DSM 14586 / JCM 11422 / NBRC 100505 / T-27)).